The chain runs to 423 residues: Glutamyl-tRNA reductase (423 aa).

Substrate-binding positions include 49–52 (TCNR), S111, 116–118 (EPQ), and Q122. Residue C50 is the Nucleophile of the active site. NADP(+) is bound at residue 191–196 (GAGEMS).

The protein belongs to the glutamyl-tRNA reductase family. Homodimer.

It carries out the reaction (S)-4-amino-5-oxopentanoate + tRNA(Glu) + NADP(+) = L-glutamyl-tRNA(Glu) + NADPH + H(+). It participates in porphyrin-containing compound metabolism; protoporphyrin-IX biosynthesis; 5-aminolevulinate from L-glutamyl-tRNA(Glu): step 1/2. Its function is as follows. Catalyzes the NADPH-dependent reduction of glutamyl-tRNA(Glu) to glutamate 1-semialdehyde (GSA). The polypeptide is Glutamyl-tRNA reductase (Syntrophus aciditrophicus (strain SB)).